Consider the following 485-residue polypeptide: Argininosuccinate lyase (485 aa).

The protein belongs to the lyase 1 family. Argininosuccinate lyase subfamily.

The protein resides in the cytoplasm. The enzyme catalyses 2-(N(omega)-L-arginino)succinate = fumarate + L-arginine. It functions in the pathway amino-acid biosynthesis; L-arginine biosynthesis; L-arginine from L-ornithine and carbamoyl phosphate: step 3/3. The sequence is that of Argininosuccinate lyase from Halobacterium salinarum (strain ATCC 29341 / DSM 671 / R1).